Reading from the N-terminus, the 891-residue chain is Dynein axonemal intermediate chain 3 (891 aa).

Over residues 1–17 (MAPKQKKKTSRGKKRLK) the composition is skewed to basic residues. Residues 1–22 (MAPKQKKKTSRGKKRLKPVLAA) form a disordered region. WD repeat units lie at residues 395–435 (ESPD…DRIE), 477–533 (GHKK…PLTP), 670–709 (IHDGTVHTIQRSPFYNDIILTVGGWNVAIWKEGVMTGPLL), and 713–753 (CAPK…HEPA). A coiled-coil region spans residues 818–861 (LEYVEQRKKIREQEKKEMELEMAKKKVKTYQKSKEQMQAELKMD).

In terms of assembly, interacts with ACTR2; this interaction reduces binding of the Arp2/3 complex to the VCA domain of nucleation promoting factors. Part of the multisubunit axonemal dynein complex formed at least of two heavy chains and a number of intermediate and light chains. Found in a associated with the catalytic heavy chain DNAH2, the intermediate chain DNAI4, and the light chain DYNLT1.

It is found in the cytoplasm. Acts as a negative regulator of cell migration, invasion, and metastasis downstream of p53/TP53, through inhibition of Arp2/3 complex-mediated actin polymerization. Via its association with the multisubunit axonemal dynein complex, is potentially involved in the regulation of cilia function. May play a role in osteogenesis of dental tissue-derived mesenchymal stem cells. The sequence is that of Dynein axonemal intermediate chain 3 from Homo sapiens (Human).